Here is a 478-residue protein sequence, read N- to C-terminus: Cytochrome c-552 (478 aa).

The N-terminal stretch at 1–26 (MTRIKINARRIFSLLIPFFFFTSVHA) is a signal peptide. Position 94 (histidine 94) interacts with heme c. Residues cysteine 122, cysteine 125, and lysine 126 each coordinate heme. Heme c contacts are provided by cysteine 160, cysteine 163, histidine 164, cysteine 209, cysteine 212, and histidine 213. Glutamate 215, tyrosine 216, lysine 261, and glutamine 263 together coordinate Ca(2+). Substrate is bound at residue tyrosine 216. Histidine 264 contacts substrate. Heme c is bound by residues histidine 275, cysteine 282, cysteine 285, histidine 286, histidine 301, cysteine 314, cysteine 317, histidine 318, and histidine 393.

This sequence belongs to the cytochrome c-552 family. Ca(2+) serves as cofactor. The cofactor is heme c.

The protein resides in the periplasm. The enzyme catalyses 6 Fe(III)-[cytochrome c] + NH4(+) + 2 H2O = 6 Fe(II)-[cytochrome c] + nitrite + 8 H(+). Its pathway is nitrogen metabolism; nitrate reduction (assimilation). In terms of biological role, catalyzes the reduction of nitrite to ammonia, consuming six electrons in the process. In Escherichia coli O9:H4 (strain HS), this protein is Cytochrome c-552.